We begin with the raw amino-acid sequence, 463 residues long: Phosphoglucosamine mutase (463 aa).

The Phosphoserine intermediate role is filled by Ser-101. Mg(2+) contacts are provided by Ser-101, Asp-256, Asp-258, and Asp-260. Ser-101 carries the phosphoserine modification.

The protein belongs to the phosphohexose mutase family. Mg(2+) serves as cofactor. Post-translationally, activated by phosphorylation.

The catalysed reaction is alpha-D-glucosamine 1-phosphate = D-glucosamine 6-phosphate. In terms of biological role, catalyzes the conversion of glucosamine-6-phosphate to glucosamine-1-phosphate. In Desulforapulum autotrophicum (strain ATCC 43914 / DSM 3382 / VKM B-1955 / HRM2) (Desulfobacterium autotrophicum), this protein is Phosphoglucosamine mutase.